A 304-amino-acid chain; its full sequence is PTB domain-containing engulfment adapter protein 1 (304 aa).

Thr16 is modified (phosphothreonine). The region spanning 21-176 (SKHFIPYNAK…AGLQKRIQDL (156 aa)) is the PID domain. A coiled-coil region spans residues 158–202 (KDVETRKQIAGLQKRIQDLETENMELKNKVQDLENQLRITQVSAP). Ser223 is subject to Phosphoserine. The tract at residues 223–246 (SPISHQSSMPTRNGTQPPPVPSRS) is disordered. The span at 225–237 (ISHQSSMPTRNGT) shows a compositional bias: polar residues.

Belongs to the ced-6 family. In terms of assembly, homodimer. Interacts with clathrin. Interacts with GDP-bound ARF6, but not with GTP-bound ARF6. Part of a complex composed of GULP1, ACAP1 and ARF6. Interacts with ACAP1, LRP1, MEGF10 and STAB2. In terms of tissue distribution, widely expressed. Detected in macrophages, pancreas, kidney, skeletal muscle, heart, colon, intestine, lung, placenta and ovary.

Its subcellular location is the cytoplasm. Its function is as follows. May function as an adapter protein. Required for efficient phagocytosis of apoptotic cells. Modulates cellular glycosphingolipid and cholesterol transport. May play a role in the internalization and endosomal trafficking of various LRP1 ligands, such as PSAP. Increases cellular levels of GTP-bound ARF6. This chain is PTB domain-containing engulfment adapter protein 1 (GULP1), found in Homo sapiens (Human).